Consider the following 269-residue polypeptide: SLFPLSLLFFLAAAYPGVGSALGRRTKRAQSPKGSPLAPSGTSVPFWVRMSPEFVAVQPGKSVQLNCSNSCPQPQNSSLRTPLRQGKTLRGPGWVSYQLLDVRAWSSLAHCLVTCAGKTRWATSRITAYKPPHSVILEPPVLKGRKYTLRCHVTQVFPVGYLVVTLRHGSRVIYSESLERFTGLDLANVTLTYEFAAGPRDFWQPVICHARLNLDGLVVRNSSAPITLMLAWSSAPTALASVSIAALVGILLTVGAAYLCKCLAMKSQA.

An N-terminal signal peptide occupies residues 1–20; sequence SLFPLSLLFFLAAAYPGVGS. Topologically, residues 21–238 are extracellular; that stretch reads ALGRRTKRAQ…MLAWSSAPTA (218 aa). 2 Ig-like C2-type domains span residues 60 to 122 and 144 to 215; these read GKSV…TRWA and GRKY…LNLD. Residues Asn66, Asn76, Asn188, and Asn221 are each glycosylated (N-linked (GlcNAc...) asparagine). 4 disulfide bridges follow: Cys67–Cys111, Cys67–Cys115, Cys71–Cys115, and Cys151–Cys208. A helical transmembrane segment spans residues 239–259; that stretch reads LASVSIAALVGILLTVGAAYL. At 260 to 269 the chain is on the cytoplasmic side; the sequence is CKCLAMKSQA.

This sequence belongs to the immunoglobulin superfamily. ICAM family. Post-translationally, N- and O-glycosylated.

The protein localises to the cell membrane. Its function is as follows. ICAM proteins are ligands for the leukocyte adhesion protein LFA-1 (integrin alpha-L/beta-2). ICAM4 is also a ligand for alpha-4/beta-1 and alpha-V integrins. The chain is Intercellular adhesion molecule 4 (ICAM4) from Pan troglodytes (Chimpanzee).